The following is a 642-amino-acid chain: Frizzled-1 (642 aa).

A signal peptide spans 1–68; that stretch reads MAEEAAPSES…WLLEAPLLLG (68 aa). 2 disordered regions span residues 26 to 45 and 76 to 99; these read PGRR…RPRA and QVSG…QYNG. At 69-317 the chain is on the extracellular side; that stretch reads VRAQAAGQVS…PEELRFSRTW (249 aa). An FZ domain is found at 106 to 225; that stretch reads PDHGYCQPIS…HGAGELCVGQ (120 aa). Cystine bridges form between C111/C172, C119/C165, C156/C193, C182/C222, and C186/C210. N-linked (GlcNAc...) asparagine glycosylation is present at N125. N-linked (GlcNAc...) asparagine glycosylation occurs at N226. A helical membrane pass occupies residues 318-338; it reads IGIWSVLCCASTLFTVLTYLV. At 339 to 349 the chain is on the cytoplasmic side; sequence DMRRFSYPERP. Residues 350-370 form a helical membrane-spanning segment; the sequence is IIFLSGCYTAVAVAYIAGFLL. The Extracellular segment spans residues 371–397; it reads EDRVVCNDKFAEDGARTVAQGTKKEGC. A helical transmembrane segment spans residues 398–418; the sequence is TILFMMLYFFSMASSIWWVIL. Residues 419 to 440 are Cytoplasmic-facing; sequence SLTWFLAAGMKWGHEAIEANSQ. A helical membrane pass occupies residues 441–461; the sequence is YFHLAAWAVPAIKTITILALG. Over 462-484 the chain is Extracellular; the sequence is QVDGDVLSGVCFVGLNNVDALRG. Residues 485-505 form a helical membrane-spanning segment; sequence FVLAPLFVYLFIGTSFLLAGF. Over 506 to 531 the chain is Cytoplasmic; it reads VSLFRIRTIMKHDGTKTEKLEKLMVR. The chain crosses the membrane as a helical span at residues 532–552; the sequence is IGVFSVLYTVPATIVIACYFY. Residues 553–593 lie on the Extracellular side of the membrane; the sequence is EQAFRDQWERSWVAQSCKSYAIPCPHLQGGGGVPPHPPMSP. A helical membrane pass occupies residues 594-614; that stretch reads DFTVFMIKYLMTLIVGITSGF. The Cytoplasmic portion of the chain corresponds to 615–642; it reads WIWSGKTLNSWRKFYTRLTNSKQGETTV. The short motif at 620-625 is the Lys-Thr-X-X-X-Trp motif, mediates interaction with the PDZ domain of Dvl family members element; that stretch reads KTLNSW. The PDZ-binding signature appears at 640–642; the sequence is TTV.

It belongs to the G-protein coupled receptor Fz/Smo family. In terms of assembly, interacts with MYOC. Interacts with WNT7B. Post-translationally, ubiquitinated by ZNRF3, leading to its degradation by the proteasome. In terms of tissue distribution, expressed in chondrocytes.

It is found in the cell membrane. Functionally, receptor for Wnt proteins. Activated by WNT7B. Activated by WNT3A, WNT3, WNT1 and to a lesser extent WNT2, but apparently not by WNT4, WNT5A, WNT5B, WNT6, WNT7A or WNT7B. Contradictory results showing activation by WNT7B have been described for mouse. Functions in the canonical Wnt/beta-catenin signaling pathway. The canonical Wnt/beta-catenin signaling pathway leads to the activation of disheveled proteins, inhibition of GSK-3 kinase, nuclear accumulation of beta-catenin and activation of Wnt target genes. A second signaling pathway involving PKC and calcium fluxes has been seen for some family members, but it is not yet clear if it represents a distinct pathway or if it can be integrated in the canonical pathway, as PKC seems to be required for Wnt-mediated inactivation of GSK-3 kinase. Both pathways seem to involve interactions with G-proteins. May be involved in transduction and intercellular transmission of polarity information during tissue morphogenesis and/or in differentiated tissues. This Mus musculus (Mouse) protein is Frizzled-1 (Fzd1).